We begin with the raw amino-acid sequence, 563 residues long: Protein NRT1/ PTR FAMILY 5.9 (563 aa).

A helical transmembrane segment spans residues 56–76; that stretch reads TWAGFTSMLPLFSAPLADTYW. Threonine 81 bears the Phosphothreonine mark. Transmembrane regions (helical) follow at residues 82–102, 110–130, 168–188, 194–214, 317–337, 362–382, 394–414, 441–461, 479–499, and 528–548; these read ILASSSVYFVGLVGLTWTAFA, TISSYFLYSSLCLVSIGLGVL, FFQLWYFGVCTGSLMGVTVMA, FGWVLGFAIPGIVIFLSILVF, FPIWMMLLMFAVIFQLPATFF, TITLSIILLMPLYDKILIPIT, VMERMGVGMFLSIIAIVIAAI, IFWLLPQYILLGISDIFTVVG, FALYTSVFGVGSFVSAALISI, and WLLALTSTISFVVYIFLCKFF.

The protein belongs to the major facilitator superfamily. Proton-dependent oligopeptide transporter (POT/PTR) (TC 2.A.17) family. As to expression, expressed in roots and flowers.

It localises to the membrane. The chain is Protein NRT1/ PTR FAMILY 5.9 (NPF5.9) from Arabidopsis thaliana (Mouse-ear cress).